The chain runs to 346 residues: Protein STAR1 (346 aa).

The segment at Gln-23–Gly-48 is disordered. The 233-residue stretch at Ile-112 to Glu-344 folds into the ABC transporter domain. Position 146-153 (Gly-146–Ser-153) interacts with ATP.

Belongs to the ABC transporter superfamily. ABCI family. As to quaternary structure, interacts with STAR2. As to expression, expressed in roots.

The protein resides in the membrane. In terms of biological role, associates with STAR2 to form a functional transmembrane ABC transporter required for detoxification of aluminum (Al) in roots. Can specifically transport UDP-glucose. The protein is Protein STAR1 of Oryza sativa subsp. japonica (Rice).